We begin with the raw amino-acid sequence, 350 residues long: tRNA uridine(34) hydroxylase (350 aa).

Positions Asp146 to Leu240 constitute a Rhodanese domain. Cys200 serves as the catalytic Cysteine persulfide intermediate.

The protein belongs to the TrhO family.

It catalyses the reaction uridine(34) in tRNA + AH2 + O2 = 5-hydroxyuridine(34) in tRNA + A + H2O. Catalyzes oxygen-dependent 5-hydroxyuridine (ho5U) modification at position 34 in tRNAs, the first step in 5-carboxymethoxyuridine (cmo5U) biosynthesis. May be part of an alternate pathway, which is able to bypass cmo5U biogenesis in a subset of tRNAs under aerobic conditions. This is tRNA uridine(34) hydroxylase from Escherichia coli (strain SE11).